The following is a 127-amino-acid chain: Glycine cleavage system H protein (127 aa).

One can recognise a Lipoyl-binding domain in the interval 22–104 (KVRIGITDFA…YEKAWMIVVE (83 aa)). Position 63 is an N6-lipoyllysine (lysine 63).

It belongs to the GcvH family. As to quaternary structure, the glycine cleavage system is composed of four proteins: P, T, L and H. It depends on (R)-lipoate as a cofactor.

Functionally, the glycine cleavage system catalyzes the degradation of glycine. The H protein shuttles the methylamine group of glycine from the P protein to the T protein. In terms of biological role, is also involved in protein lipoylation via its role as an octanoyl/lipoyl carrier protein intermediate. This is Glycine cleavage system H protein from Bacillus licheniformis (strain ATCC 14580 / DSM 13 / JCM 2505 / CCUG 7422 / NBRC 12200 / NCIMB 9375 / NCTC 10341 / NRRL NRS-1264 / Gibson 46).